Consider the following 536-residue polypeptide: Probable cytochrome P450 520A1 (536 aa).

Residues 1–21 (MEILTFIIYLITFFILFDFYK) form a helical membrane-spanning segment. Cys-479 lines the heme pocket.

Belongs to the cytochrome P450 family. Heme is required as a cofactor.

Its subcellular location is the membrane. In Dictyostelium discoideum (Social amoeba), this protein is Probable cytochrome P450 520A1 (cyp520A1).